Here is a 266-residue protein sequence, read N- to C-terminus: Killer cell lectin-like receptor 8 (266 aa).

The Cytoplasmic portion of the chain corresponds to 1-44 (MSEQEVTFPTMRFHKSSGLNSQVRLEGTQRSRKAGLRVCSVPWQ). A helical; Signal-anchor for type II membrane protein membrane pass occupies residues 45–66 (LIVIALGILCSLRLVIVAVFVT). Residues 67 to 266 (KFFQYSQHKQ…CGKKLDKFPD (200 aa)) lie on the Extracellular side of the membrane. N-linked (GlcNAc...) asparagine glycans are attached at residues Asn87 and Asn104. One can recognise a C-type lectin domain in the interval 143-261 (GVKYWFCYGT…PYYCICGKKL (119 aa)). Intrachain disulfides connect Cys149–Cys154, Cys167–Cys255, Cys171–Cys257, and Cys236–Cys249.

In terms of assembly, homodimer; disulfide-linked. Interacts with the adapter protein TYROBP/DAP12; the interaction leads to natural killer cell activation.

It localises to the cell membrane. Receptor on natural killer (NK) cells for class I MHC. The polypeptide is Killer cell lectin-like receptor 8 (Klra8) (Mus musculus (Mouse)).